Consider the following 185-residue polypeptide: NEDD8-conjugating enzyme UBE2F (185 aa).

An N-acetylmethionine modification is found at methionine 1. The tract at residues 1-29 is interaction with UBA3; it reads MLTLASKLKRDDGLKGSRTAATASDSTRR. A UBC core domain is found at 32 to 185; that stretch reads VRDKLLVKEV…VDDYIKRYAR (154 aa). Residue cysteine 116 is the Glycyl thioester intermediate of the active site.

It belongs to the ubiquitin-conjugating enzyme family. UBE2F subfamily. As to quaternary structure, interacts with UBA3 and RBX2. Interacts (N-terminally acetylated form) with (via DCUN1 domain) DCUN1D1, DCUN1D2, DCUN1D3, DCUN1D4 and DCUN1D5. The acetylation of Met-1 increases affinity for DCUN1D3 by about 2 orders of magnitude and is crucial for NEDD8 transfer to cullins. As to expression, widely expressed (at protein level).

The enzyme catalyses [E1 NEDD8-activating enzyme]-S-[NEDD8 protein]-yl-L-cysteine + [E2 NEDD8-conjugating enzyme]-L-cysteine = [E1 NEDD8-activating enzyme]-L-cysteine + [E2 NEDD8-conjugating enzyme]-S-[NEDD8-protein]-yl-L-cysteine.. It functions in the pathway protein modification; protein neddylation. In terms of biological role, accepts the ubiquitin-like protein NEDD8 from the UBA3-NAE1 E1 complex and catalyzes its covalent attachment to other proteins. Together with the E3 ubiquitin ligase RNF7/RBX2, specifically neddylates cullin-5 (CUL5). Does not neddylate CUL1, CUL2, CUL3, CUL4A or CUL4B. Mediates neddylation of the CUL9-RBX1 complex. Its function is as follows. (Microbial infection) Following infection by HIV-1 virus, participates to HIV-1 Vif protein-mediated ubiquitination and degradation of APOBEC3G by mediating neddylation of cullin-5 (CUL5). The chain is NEDD8-conjugating enzyme UBE2F (UBE2F) from Homo sapiens (Human).